The sequence spans 465 residues: Putative F-box protein At1g21990 (465 aa).

An F-box domain is found at 8–54 (RDLISGSPDEILGKILSFLPTHHAATTSVLSKRWRNLLPLVDKLELT).

This Arabidopsis thaliana (Mouse-ear cress) protein is Putative F-box protein At1g21990.